A 733-amino-acid chain; its full sequence is ATP-dependent RNA helicase MAK5 (733 aa).

The tract at residues 53–132 is disordered; sequence EAQVKEEEES…HEDEKETPED (80 aa). Residues 58 to 99 are compositionally biased toward acidic residues; sequence EEEESSESDFPDFDAMEQEDDGDVEEAEEEEEEEEDVAEADE. Residues 100–126 are compositionally biased toward basic and acidic residues; that stretch reads PEVKQKQEQARVEQIDKGVDSEKHEDE. Positions 155-183 match the Q motif motif; sequence GWTDTVDLSMTTINGLSNLGFTEMTPIQK. One can recognise a Helicase ATP-binding domain in the interval 186 to 376; the sequence is IPAALEGKDI…ANSSWKKKNN (191 aa). 199–206 contributes to the ATP binding site; sequence ASTGSGKT. Residues 315-318 carry the DEAD box motif; sequence DEAD. Residues 428 to 594 form the Helicase C-terminal domain; sequence DLYCYYFVTL…TVPLLPIEID (167 aa).

The protein belongs to the DEAD box helicase family. DDX24/MAK5 subfamily.

The protein resides in the nucleus. It localises to the nucleolus. It catalyses the reaction ATP + H2O = ADP + phosphate + H(+). In terms of biological role, ATP-binding RNA helicase involved in the biogenesis of 60S ribosomal subunits and is required for the normal formation of 25S and 5.8S rRNAs. The sequence is that of ATP-dependent RNA helicase MAK5 (MAK5) from Candida glabrata (strain ATCC 2001 / BCRC 20586 / JCM 3761 / NBRC 0622 / NRRL Y-65 / CBS 138) (Yeast).